A 314-amino-acid chain; its full sequence is Very long chain fatty acid elongase 4 (314 aa).

The N-linked (GlcNAc...) asparagine glycan is linked to N20. 7 helical membrane passes run 42-62, 78-98, 127-147, 165-185, 188-208, 217-237, and 247-267; these read LMQS…FVWL, VLII…RELF, ALWW…FFIL, MFTL…FFGA, NSFI…GPWI, YLTM…ALSL, and MHWA…NFYI. The interval 275–314 is disordered; it reads KPKAGKTAMNGISANGVSKSEKQLMIENGKKQKNGKAKGD. Over residues 293–304 the composition is skewed to basic and acidic residues; the sequence is KSEKQLMIENGK. Over residues 305–314 the composition is skewed to basic residues; that stretch reads KQKNGKAKGD. The short motif at 310-314 is the Di-lysine motif element; that stretch reads KAKGD.

It belongs to the ELO family. ELOVL4 subfamily. Oligomer. In terms of processing, N-glycosylated. As to expression, expressed in the retina and at much lower level in the brain. Ubiquitous, highest expression in thymus, followed by testis, small intestine, ovary, and prostate. Little or no expression in heart, lung, liver, or leukocates.

It localises to the endoplasmic reticulum membrane. The enzyme catalyses a very-long-chain acyl-CoA + malonyl-CoA + H(+) = a very-long-chain 3-oxoacyl-CoA + CO2 + CoA. It carries out the reaction tetracosanoyl-CoA + malonyl-CoA + H(+) = 3-oxohexacosanoyl-CoA + CO2 + CoA. The catalysed reaction is hexacosanoyl-CoA + malonyl-CoA + H(+) = 3-oxooctacosanyol-CoA + CO2 + CoA. It catalyses the reaction octacosanoyl-CoA + malonyl-CoA + H(+) = 3-oxo-triacontanoyl-CoA + CO2 + CoA. The enzyme catalyses triacontanoyl-CoA + malonyl-CoA + H(+) = 3-oxo-dotriacontanoyl-CoA + CO2 + CoA. It carries out the reaction (19Z,22Z,25Z,28Z,31Z)-tetratriacontapentaenoyl-CoA + malonyl-CoA + H(+) = 3-oxo-(21Z,24Z,27Z,30Z,33Z)-hexatriacontapentaenoyl-CoA + CO2 + CoA. The catalysed reaction is (4Z,7Z,10Z,13Z,16Z,19Z)-docosahexaenoyl-CoA + malonyl-CoA + H(+) = 3-oxo-(6Z,9Z,12Z,15Z,18Z,21Z)-tetracosahexaenoyl-CoA + CO2 + CoA. It catalyses the reaction (7Z,10Z,13Z,16Z)-docosatetraenoyl-CoA + malonyl-CoA + H(+) = (9Z,12Z,15Z,18Z)-3-oxotetracosatetraenoyl-CoA + CO2 + CoA. The enzyme catalyses (11Z,14Z,17Z,20Z,23Z)-hexacosapentaenoyl-CoA + malonyl-CoA + H(+) = 3-oxo-(13Z,16Z,19Z,22Z,25Z)-octacosapentaenoyl-CoA + CO2 + CoA. It carries out the reaction (13Z,16Z,19Z,22Z,25Z)-octacosapentaenoyl-CoA + malonyl-CoA + H(+) = 3-oxo-(15Z,18Z,21Z,24Z,27Z)-triacontapentaenoyl-CoA + CO2 + CoA. The catalysed reaction is (15Z,18Z,21Z,24Z,27Z)-triacontapentaenoyl-CoA + malonyl-CoA + H(+) = 3-oxo-(17Z,20Z,23Z,26Z,29Z)-dotriacontapentaenoyl-CoA + CO2 + CoA. It catalyses the reaction (17Z,20Z,23Z,26Z,29Z)-dotriacontapentaenoyl-CoA + malonyl-CoA + H(+) = 3-oxo-(19Z,22Z,25Z,28Z,31Z)-tetratriacontapentaenoyl-CoA + CO2 + CoA. The enzyme catalyses (21Z,24Z,27Z,30Z,33Z)-hexatriacontapentaenoyl-CoA + malonyl-CoA + H(+) = 3-oxo-(23Z,26Z,29Z,32Z,35Z)-octatriacontapentaenoyl-CoA + CO2 + CoA. It carries out the reaction (11Z,14Z,17Z,20Z)-hexacosatetraenoyl-CoA + malonyl-CoA + H(+) = (13Z,16Z,19Z,22Z)-3-oxooctacosatetraenoyl-CoA + CO2 + CoA. The catalysed reaction is (13Z,16Z,19Z,22Z)-octacosatetraenoyl-CoA + malonyl-CoA + H(+) = 3-oxo-(15Z,18Z,21Z,24Z)-triacontatetraenoyl-CoA + CO2 + CoA. It catalyses the reaction (15Z,18Z,21Z,24Z)-triacontatetraenoyl-CoA + malonyl-CoA + H(+) = 3-oxo-(17Z,20Z,23Z,26Z)-dotriacontatetraenoyl-CoA + CO2 + CoA. The enzyme catalyses (17Z,20Z,23Z,26Z)-dotriacontatetraenoyl-CoA + malonyl-CoA + H(+) = 3-oxo-(19Z,22Z,25Z,28Z)-tetratriacontatetraenoyl-CoA + CO2 + CoA. It carries out the reaction (19Z,22Z,25Z,28Z)-tetratriacontatetraenoyl-CoA + malonyl-CoA + H(+) = 3-oxo-(21Z,24Z,27Z,30Z)-hexatriacontatetraenoyl-CoA + CO2 + CoA. The catalysed reaction is (21Z,24Z,27Z,30Z)-hexatriacontatetraenoyl-CoA + malonyl-CoA + H(+) = 3-oxo-(23Z,26Z,29Z,32Z)-octatriacontatetraenoyl-CoA + CO2 + CoA. It catalyses the reaction (6Z,9Z,12Z,15Z,18Z,21Z)-tetracosahexaenoyl-CoA + malonyl-CoA + H(+) = 3-oxo-(8Z,11Z,14Z,17Z,20Z,23Z)-hexacosahexaenoyl-CoA + CO2 + CoA. The enzyme catalyses (8Z,11Z,14Z,17Z,20Z,23Z)-hexacosahexaenoyl-CoA + malonyl-CoA + H(+) = 3-oxo-(10Z,13Z,16Z,19Z,22Z,25Z)-octacosahexaenoyl-CoA + CO2 + CoA. It carries out the reaction (10Z,13Z,16Z,19Z,22Z,25Z)-octacosahexaenoyl-CoA + malonyl-CoA + H(+) = 3-oxo-(12Z,15Z,18Z,21Z,24Z,27Z)-triacontahexaenoyl-CoA + CO2 + CoA. The catalysed reaction is (12Z,15Z,18Z,21Z,24Z,27Z)-triacontahexaenoyl-CoA + malonyl-CoA + H(+) = 3-oxo-(14Z,17Z,20Z,23Z,26Z,29Z)-dotriacontahexaenoyl-CoA + CO2 + CoA. It catalyses the reaction (14Z,17Z,20Z,23Z,26Z,29Z)-dotriacontahexaenoyl-CoA + malonyl-CoA + H(+) = 3-oxo-(16Z,19Z,22Z,25Z,28Z,31Z)-tetratriacontahexaenoyl-CoA + CO2 + CoA. The enzyme catalyses (16Z,19Z,22Z,25Z,28Z,31Z)-tetratriacontahexaenoyl-CoA + malonyl-CoA + H(+) = 3-oxo-(18Z,21Z,24Z,27Z,30Z,33Z)-hexatriacontahexaenoyl-CoA + CO2 + CoA. It carries out the reaction (9Z,12Z,15Z,18Z,21Z)-tetracosapentaenoyl-CoA + malonyl-CoA + H(+) = 3-oxo-(11Z,14Z,17Z,20Z,23Z)-hexacosapentaenoyl-CoA + CO2 + CoA. The protein operates within lipid metabolism; fatty acid biosynthesis. Catalyzes the first and rate-limiting reaction of the four reactions that constitute the long-chain fatty acids elongation cycle. This endoplasmic reticulum-bound enzymatic process allows the addition of 2 carbons to the chain of long- and very long-chain fatty acids (VLCFAs) per cycle. Condensing enzyme that catalyzes the synthesis of very long chain saturated (VLC-SFA) and polyunsaturated (PUFA) fatty acids that are involved in multiple biological processes as precursors of membrane lipids and lipid mediators. May play a critical role in early brain and skin development. In Homo sapiens (Human), this protein is Very long chain fatty acid elongase 4.